We begin with the raw amino-acid sequence, 468 residues long: Beta-monoglucosyldiacylglycerol synthase (468 aa).

4 consecutive transmembrane segments (helical) span residues 51 to 71, 72 to 92, 358 to 378, and 387 to 407; these read AALV…VSWG, SIFI…VVFA, MLMF…DLLM, and MLGP…FAGL.

This sequence belongs to the glycosyltransferase 2 family. Mg(2+) serves as cofactor.

It localises to the membrane. It catalyses the reaction a 1,2-diacyl-sn-glycerol + UDP-alpha-D-glucose = a 1,2-diacyl-3-O-(beta-D-glucopyranosyl)-sn-glycerol + UDP + H(+). Functionally, glucosyltransferase involved in the biosynthesis of the non-bilayer-forming membrane lipid beta-monoglucosyldiacylglycerol which contributes to regulate the properties and stability of the membrane. Catalyzes the transfer of a glucosyl residue from UDP-Glc to diacylglycerol (DAG) acceptor to form the corresponding beta-glucosyl-DAG (1,2-diacyl-3-O-(beta-D-glucopyranosyl)-sn-glycerol). It can only use UDP-Glc as sugar donor. Two types of DAG (dipalmitoyl-DAG (DPDAG) and 1-oleoyl-2-palmitoyl-DAG (OPDAG)) can be used as sugar acceptors, but OPDAG is preferred. This is Beta-monoglucosyldiacylglycerol synthase from Nostoc sp. (strain PCC 7120 / SAG 25.82 / UTEX 2576).